Reading from the N-terminus, the 395-residue chain is DNA polymerase IV (395 aa).

In terms of domain architecture, UmuC spans 7–187 (FFHVDIDAFF…LPLKDVWGVG (181 aa)). Mg(2+) contacts are provided by Asp-11 and Asp-105. The active site involves Glu-106.

This sequence belongs to the DNA polymerase type-Y family. Monomer. It depends on Mg(2+) as a cofactor.

It is found in the cytoplasm. It carries out the reaction DNA(n) + a 2'-deoxyribonucleoside 5'-triphosphate = DNA(n+1) + diphosphate. Poorly processive, error-prone DNA polymerase involved in untargeted mutagenesis. Copies undamaged DNA at stalled replication forks, which arise in vivo from mismatched or misaligned primer ends. These misaligned primers can be extended by PolIV. Exhibits no 3'-5' exonuclease (proofreading) activity. May be involved in translesional synthesis, in conjunction with the beta clamp from PolIII. The polypeptide is DNA polymerase IV (Treponema denticola (strain ATCC 35405 / DSM 14222 / CIP 103919 / JCM 8153 / KCTC 15104)).